The chain runs to 119 residues: MGNMGTSELLKHIYDINLSYLLLAQRLINDEKASAMFRLGIDETMADALAQLTLPQMVKLAETNQLVCHFRFNESQTIERLTKESRVDDLQQIHTGILLSSHLLQELSSKDASPTKKRA.

This sequence belongs to the FlhD family. In terms of assembly, homodimer; disulfide-linked. Forms a heterohexamer composed of two FlhC and four FlhD subunits. Each FlhC binds a FlhD dimer, forming a heterotrimer, and a hexamer assembles by dimerization of two heterotrimers.

The protein localises to the cytoplasm. Functionally, functions in complex with FlhC as a master transcriptional regulator that regulates transcription of several flagellar and non-flagellar operons by binding to their promoter region. Activates expression of class 2 flagellar genes, including fliA, which is a flagellum-specific sigma factor that turns on the class 3 genes. Also regulates genes whose products function in a variety of physiological pathways. This is Flagellar transcriptional regulator FlhD from Serratia marcescens.